Consider the following 787-residue polypeptide: MERSDSRDFYNFAKTSSDNNSALFDASQYEFFGQSLEEVELGGLDDDGTVRGHVDDEEYHLFDKREGAGLGSLSDMDDLATTFAKLNRNVTGPKHLGVIGDRGSGSFSRESSTATDWTQDNEFTSWLDQHTVEEQVQEASWSSQPQSSPNSNSLYRTSSYPQQQTQLQHYSSEPIIVPESTFTSFPSPGKRSQQSSPSHIHRAPSLPGGSQSNFSAPNASPLSNSTFHLSGLSHGPSHYGNNLARYASCGPTLGNMVQQPPHWVTDPGLLHGDHSALLHSLMQQQHLQQLPPRNGFTSQQLISLQQRQSLAHLAALQSQLYSSYPSPSHKALFGVGEVREHKHKSSHRSRKNRGGISQQTSDLASQKSESGLQFRSKYMTSEEIESILKMQHSNSHSSDPYVNDYYHQARLAKKSSGSRTKPQLYPSHLKDHQSRSRNSSDQQPQVHVDALGKITLPSICRPRALLEVDSPPSSGHKHLEDEPLVAARVTIEDAFGVLIDIVDIDRTLQFNRPQDGGAQLRRKRQILLEGLATSLQLVDPFSKTGQKTGLTTKDDIVFLRITTLPKGRKLLTKYLQLLVPGTEIARVVCMAVFRHLRFLFGGLPSDSLAAETIANLAKAVTVCVQAMDLRALSACLAAVVCSSEQPPLRPIGSSSGDGASVVLVSLLERAAEVIVAVVPPRVSNHGNPNDGLWRASFDEFFSLLTKYCRSKYETIHGQNHDNAADVLELAIKREMPAELLRASLRHTNEDQRNFLLNVGRSASPVSESTTTRASASGGQINSEFVRG.

Disordered regions lie at residues 94–120, 134–221, 338–374, 411–445, and 765–787; these read KHLGVIGDRGSGSFSRESSTATDWTQD, EQVQ…NASP, VREHKHKSSHRSRKNRGGISQQTSDLASQKSESGLQF, LAKKSSGSRTKPQLYPSHLKDHQSRSRNSSDQQPQ, and VSESTTTRASASGGQINSEFVRG. Positions 105–120 are enriched in polar residues; it reads GSFSRESSTATDWTQD. Low complexity predominate over residues 142–153; the sequence is SSQPQSSPNSNS. Composition is skewed to polar residues over residues 154–171, 180–198, and 208–221; these read LYRTSSYPQQQTQLQHYS, STFTSFPSPGKRSQQSSPS, and GGSQSNFSAPNASP. 2 positions are modified to phosphoserine: Ser-184 and Ser-192. Over residues 341-353 the composition is skewed to basic residues; that stretch reads HKHKSSHRSRKNR. 2 stretches are compositionally biased toward polar residues: residues 355–373 and 436–445; these read GISQQTSDLASQKSESGLQ and SRNSSDQQPQ.

In terms of biological role, activator of mRNA decapping. Involved in mRNA decay via decapping. The protein is Protein PAT1 homolog 2 of Arabidopsis thaliana (Mouse-ear cress).